The chain runs to 81 residues: uncharacterized protein (81 aa).

Residues 1 to 20 constitute a mitochondrion transit peptide; it reads MYSRVLSVAAIVTMALAVQA. The segment at 27–53 is disordered; it reads YGNTTNSTGTTNGTNGTNTTTSSTATQ. Over residues 28–53 the composition is skewed to low complexity; it reads GNTTNSTGTTNGTNGTNTTTSSTATQ. The helical transmembrane segment at 59–79 threads the bilayer; that stretch reads ITNFSSGAFVIAMIAVACSVM.

The protein localises to the mitochondrion membrane. This is an uncharacterized protein from Schizosaccharomyces pombe (strain 972 / ATCC 24843) (Fission yeast).